A 152-amino-acid polypeptide reads, in one-letter code: Large ribosomal subunit protein uL15 (152 aa).

It belongs to the universal ribosomal protein uL15 family. As to quaternary structure, part of the 50S ribosomal subunit.

In terms of biological role, binds to the 23S rRNA. In Staphylothermus marinus (strain ATCC 43588 / DSM 3639 / JCM 9404 / F1), this protein is Large ribosomal subunit protein uL15.